Here is a 286-residue protein sequence, read N- to C-terminus: Pantothenate synthetase (286 aa).

31–38 (MGALHDGH) serves as a coordination point for ATP. H38 serves as the catalytic Proton donor. Q62 lines the (R)-pantoate pocket. Position 62 (Q62) interacts with beta-alanine. 148–151 (GKKD) is a binding site for ATP. Residue Q154 participates in (R)-pantoate binding. Residues V177 and 185–188 (KSSR) each bind ATP.

The protein belongs to the pantothenate synthetase family. As to quaternary structure, homodimer.

It is found in the cytoplasm. The catalysed reaction is (R)-pantoate + beta-alanine + ATP = (R)-pantothenate + AMP + diphosphate + H(+). The protein operates within cofactor biosynthesis; (R)-pantothenate biosynthesis; (R)-pantothenate from (R)-pantoate and beta-alanine: step 1/1. In terms of biological role, catalyzes the condensation of pantoate with beta-alanine in an ATP-dependent reaction via a pantoyl-adenylate intermediate. This chain is Pantothenate synthetase, found in Staphylococcus epidermidis (strain ATCC 35984 / DSM 28319 / BCRC 17069 / CCUG 31568 / BM 3577 / RP62A).